A 264-amino-acid chain; its full sequence is 3-methyl-2-oxobutanoate hydroxymethyltransferase (264 aa).

Mg(2+)-binding residues include aspartate 45 and aspartate 84. 3-methyl-2-oxobutanoate-binding positions include 45-46, aspartate 84, and lysine 112; that span reads DS. Glutamate 114 lines the Mg(2+) pocket. The active-site Proton acceptor is the glutamate 181.

It belongs to the PanB family. As to quaternary structure, homodecamer; pentamer of dimers. Mg(2+) is required as a cofactor.

The protein resides in the cytoplasm. It carries out the reaction 3-methyl-2-oxobutanoate + (6R)-5,10-methylene-5,6,7,8-tetrahydrofolate + H2O = 2-dehydropantoate + (6S)-5,6,7,8-tetrahydrofolate. It functions in the pathway cofactor biosynthesis; (R)-pantothenate biosynthesis; (R)-pantoate from 3-methyl-2-oxobutanoate: step 1/2. Its function is as follows. Catalyzes the reversible reaction in which hydroxymethyl group from 5,10-methylenetetrahydrofolate is transferred onto alpha-ketoisovalerate to form ketopantoate. This is 3-methyl-2-oxobutanoate hydroxymethyltransferase from Shewanella oneidensis (strain ATCC 700550 / JCM 31522 / CIP 106686 / LMG 19005 / NCIMB 14063 / MR-1).